Consider the following 349-residue polypeptide: Nicotinate-nucleotide--dimethylbenzimidazole phosphoribosyltransferase (349 aa).

Glutamate 318 acts as the Proton acceptor in catalysis.

The protein belongs to the CobT family.

It catalyses the reaction 5,6-dimethylbenzimidazole + nicotinate beta-D-ribonucleotide = alpha-ribazole 5'-phosphate + nicotinate + H(+). The protein operates within nucleoside biosynthesis; alpha-ribazole biosynthesis; alpha-ribazole from 5,6-dimethylbenzimidazole: step 1/2. Functionally, catalyzes the synthesis of alpha-ribazole-5'-phosphate from nicotinate mononucleotide (NAMN) and 5,6-dimethylbenzimidazole (DMB). This chain is Nicotinate-nucleotide--dimethylbenzimidazole phosphoribosyltransferase, found in Geobacter sp. (strain M21).